We begin with the raw amino-acid sequence, 338 residues long: Phenylalanine--tRNA ligase alpha subunit (338 aa).

Glutamate 253 provides a ligand contact to Mg(2+).

Belongs to the class-II aminoacyl-tRNA synthetase family. Phe-tRNA synthetase alpha subunit type 1 subfamily. Tetramer of two alpha and two beta subunits. The cofactor is Mg(2+).

It is found in the cytoplasm. The catalysed reaction is tRNA(Phe) + L-phenylalanine + ATP = L-phenylalanyl-tRNA(Phe) + AMP + diphosphate + H(+). This chain is Phenylalanine--tRNA ligase alpha subunit, found in Syntrophus aciditrophicus (strain SB).